Reading from the N-terminus, the 170-residue chain is Ribosome maturation factor RimM (170 aa).

One can recognise a PRC barrel domain in the interval 98-170 (EGQYYWADLE…RIELDWDPDF (73 aa)).

The protein belongs to the RimM family. Binds ribosomal protein uS19.

Its subcellular location is the cytoplasm. An accessory protein needed during the final step in the assembly of 30S ribosomal subunit, possibly for assembly of the head region. Essential for efficient processing of 16S rRNA. May be needed both before and after RbfA during the maturation of 16S rRNA. It has affinity for free ribosomal 30S subunits but not for 70S ribosomes. This chain is Ribosome maturation factor RimM, found in Alkalilimnicola ehrlichii (strain ATCC BAA-1101 / DSM 17681 / MLHE-1).